We begin with the raw amino-acid sequence, 524 residues long: Gamma-taxilin (524 aa).

Residues Met1 to Arg10 show a composition bias toward basic and acidic residues. Disordered stretches follow at residues Met1–Ile37 and Leu64–Ser86. 2 positions are modified to omega-N-methylarginine: Arg12 and Arg24. Residues Ser79, Ser86, and Ser97 each carry the phosphoserine modification. Positions Arg106–Arg115 are enriched in basic and acidic residues. Positions Arg106–Asn130 are disordered. Residues Glu153 to Asp465 are a coiled coil. Tyr283 bears the Phosphotyrosine mark. The tract at residues Val501 to Asp524 is disordered. Ser512 bears the Phosphoserine mark.

It belongs to the taxilin family. In terms of assembly, binds to the C-terminal coiled coil region of syntaxin family members STX1A, STX3A and STX4A. Forms a heterodimer with ATF4 in osteoblasts.

It localises to the nucleus membrane. Its subcellular location is the cytoplasm. The protein localises to the cytosol. Functionally, may be involved in intracellular vesicle traffic. Inhibits ATF4-mediated transcription, possibly by dimerizing with ATF4 to form inactive dimers that cannot bind DNA. May be involved in regulating bone mass density through an ATF4-dependent pathway. May be involved in cell cycle progression. This Mus musculus (Mouse) protein is Gamma-taxilin (Txlng).